The chain runs to 170 residues: NADH-quinone oxidoreductase subunit B (170 aa).

[4Fe-4S] cluster contacts are provided by Cys42, Cys43, Cys107, and Cys136.

It belongs to the complex I 20 kDa subunit family. As to quaternary structure, NDH-1 is composed of 14 different subunits. Subunits NuoB, C, D, E, F, and G constitute the peripheral sector of the complex. The cofactor is [4Fe-4S] cluster.

The protein localises to the cell inner membrane. It catalyses the reaction a quinone + NADH + 5 H(+)(in) = a quinol + NAD(+) + 4 H(+)(out). Its function is as follows. NDH-1 shuttles electrons from NADH, via FMN and iron-sulfur (Fe-S) centers, to quinones in the respiratory chain. The immediate electron acceptor for the enzyme in this species is believed to be ubiquinone. Couples the redox reaction to proton translocation (for every two electrons transferred, four hydrogen ions are translocated across the cytoplasmic membrane), and thus conserves the redox energy in a proton gradient. This Campylobacter curvus (strain 525.92) protein is NADH-quinone oxidoreductase subunit B.